Here is a 287-residue protein sequence, read N- to C-terminus: Protein HEXIM2 (287 aa).

Disordered stretches follow at residues 1–212 (MKDW…RSKE) and 266–287 (RLRQ…QPGS). A Phosphoserine modification is found at Ser-31. Thr-34 and Thr-48 each carry phosphothreonine. Ser-53, Ser-55, Ser-73, Ser-78, and Ser-83 each carry phosphoserine. Over residues 89–105 (ARKKHRRRPSKRKRHWR) the composition is skewed to basic residues. Residues 115–134 (KQQRDERQSQRASRVREEMF) are compositionally biased toward basic and acidic residues. Residues 142-145 (PYNT) form an interaction with P-TEFb region. Basic and acidic residues-rich tracts occupy residues 181–212 (GQGR…RSKE) and 266–280 (RLRQ…EGGR). Residues 208–278 (GRSKEELVRD…QENEMWNREG (71 aa)) adopt a coiled-coil conformation. The interval 227–287 (QAEEEMRRLR…GGRRGGQPGS (61 aa)) is interaction with CCNT1, HEXIM1 and HEXIM2.

The protein belongs to the HEXIM family. In terms of assembly, homooligomer and heterooligomer with HEXIM1; probably dimeric. Core component of the 7SK RNP complex, at least composed of 7SK RNA, LARP7, MEPCE, HEXIM1 (or HEXIM2) and P-TEFb (composed of CDK9 and CCNT1/cyclin-T1). Interacts with CCNT2.

It localises to the nucleus. In terms of biological role, transcriptional regulator which functions as a general RNA polymerase II transcription inhibitor. Core component of the 7SK RNP complex: in cooperation with 7SK snRNA sequesters P-TEFb in a large inactive 7SK snRNP complex preventing RNA polymerase II phosphorylation and subsequent transcriptional elongation. The chain is Protein HEXIM2 (HEXIM2) from Bos taurus (Bovine).